A 340-amino-acid polypeptide reads, in one-letter code: Guanine nucleotide-binding protein subunit beta-1 (340 aa).

WD repeat units follow at residues 53–83, 95–125, 141–170, 182–212, 224–254, 268–298, and 310–340; these read GHLA…IVWD, LRSS…SIYS, GHTG…ALWD, GHTG…KLWD, GHES…RLFD, NIIC…NVWD, and GHDN…KIWN.

It belongs to the WD repeat G protein beta family. In terms of assembly, g proteins are composed of 3 units, alpha, beta and gamma. Interacts with G protein gamma subunits gpc-1 and gpc-2 and with egl-10 and eat-16. Interacts with goa-1 (in GDP-bound form).

Functionally, guanine nucleotide-binding proteins (G proteins) are involved as a modulator or transducer in various transmembrane signaling systems. The beta and gamma chains are required for the GTPase activity, for replacement of GDP by GTP, and for G protein-effector interaction. In the early embryo, controls the magnitude of the forces acting on centrosomes but is not required for generating asymmetric forces. The chain is Guanine nucleotide-binding protein subunit beta-1 (gpb-1) from Caenorhabditis briggsae.